We begin with the raw amino-acid sequence, 79 residues long: Raniseptin-9 (79 aa).

An N-terminal signal peptide occupies residues Met1 to Cys22. The propeptide occupies Glu23–Glu49. The segment at Arg27 to Glu46 is disordered. Over residues Glu30–Glu44 the composition is skewed to acidic residues.

The protein belongs to the frog skin active peptide (FSAP) family. Dermaseptin subfamily. As to expression, expressed by the skin glands.

The protein resides in the secreted. Has antibacterial activity. This chain is Raniseptin-9, found in Boana raniceps (Chaco tree frog).